The chain runs to 176 residues: Translation initiation factor IF-3 (176 aa).

The protein belongs to the IF-3 family. Monomer.

It localises to the cytoplasm. IF-3 binds to the 30S ribosomal subunit and shifts the equilibrium between 70S ribosomes and their 50S and 30S subunits in favor of the free subunits, thus enhancing the availability of 30S subunits on which protein synthesis initiation begins. In Streptococcus thermophilus (strain ATCC BAA-491 / LMD-9), this protein is Translation initiation factor IF-3.